The chain runs to 451 residues: Tubulin alpha-2 chain (451 aa).

Glutamine 11 provides a ligand contact to GTP. Lysine 40 carries the post-translational modification N6-acetyllysine. GTP-binding residues include glutamate 71, glycine 144, threonine 145, threonine 179, asparagine 206, and asparagine 228. Position 71 (glutamate 71) interacts with Mg(2+). The active site involves glutamate 254.

The protein belongs to the tubulin family. Dimer of alpha and beta chains. A typical microtubule is a hollow water-filled tube with an outer diameter of 25 nm and an inner diameter of 15 nM. Alpha-beta heterodimers associate head-to-tail to form protofilaments running lengthwise along the microtubule wall with the beta-tubulin subunit facing the microtubule plus end conferring a structural polarity. Microtubules usually have 13 protofilaments but different protofilament numbers can be found in some organisms and specialized cells. It depends on Mg(2+) as a cofactor. In terms of processing, undergoes a tyrosination/detyrosination cycle, the cyclic removal and re-addition of a C-terminal tyrosine residue by the enzymes tubulin tyrosine carboxypeptidase (TTCP) and tubulin tyrosine ligase (TTL), respectively. Post-translationally, acetylation of alpha chains at Lys-40 stabilizes microtubules and affects affinity and processivity of microtubule motors. This modification has a role in multiple cellular functions, ranging from cell motility, cell cycle progression or cell differentiation to intracellular trafficking and signaling.

It localises to the cytoplasm. It is found in the cytoskeleton. The catalysed reaction is GTP + H2O = GDP + phosphate + H(+). Functionally, tubulin is the major constituent of microtubules, a cylinder consisting of laterally associated linear protofilaments composed of alpha- and beta-tubulin heterodimers. Microtubules grow by the addition of GTP-tubulin dimers to the microtubule end, where a stabilizing cap forms. Below the cap, tubulin dimers are in GDP-bound state, owing to GTPase activity of alpha-tubulin. This chain is Tubulin alpha-2 chain (TUBA), found in Oryza sativa subsp. japonica (Rice).